Here is a 477-residue protein sequence, read N- to C-terminus: Tyrosine--tRNA ligase, mitochondrial (477 aa).

Residues 1–16 constitute a mitochondrion transit peptide; the sequence is MAAPILRSFSWGRWSG. L-tyrosine is bound at residue Tyr77. Asp81 serves as a coordination point for ATP. The 'HIGH' region signature appears at 82-91; sequence PTADSLHVGH. Positions 121, 221, 225, and 228 each coordinate L-tyrosine. 244–246 lines the ATP pocket; that stretch reads GSD. L-tyrosine is bound at residue Gln247. 2 residues coordinate ATP: Ile274 and Lys284. Positions 281–285 match the 'KMSKS' region motif; sequence KLGKS. Lys355 and Lys367 each carry N6-acetyllysine.

The protein belongs to the class-I aminoacyl-tRNA synthetase family. Homodimer.

Its subcellular location is the mitochondrion matrix. The enzyme catalyses tRNA(Tyr) + L-tyrosine + ATP = L-tyrosyl-tRNA(Tyr) + AMP + diphosphate + H(+). Its function is as follows. Catalyzes the attachment of tyrosine to tRNA(Tyr) in a two-step reaction: tyrosine is first activated by ATP to form Tyr-AMP and then transferred to the acceptor end of tRNA(Tyr). This Homo sapiens (Human) protein is Tyrosine--tRNA ligase, mitochondrial (YARS2).